We begin with the raw amino-acid sequence, 199 residues long: Protein GrpE (199 aa).

The tract at residues 20–52 (YKVENEILEEETDEESQHQEPALGHPSYTALEE) is disordered.

Belongs to the GrpE family. Homodimer.

It is found in the cytoplasm. Functionally, participates actively in the response to hyperosmotic and heat shock by preventing the aggregation of stress-denatured proteins, in association with DnaK and GrpE. It is the nucleotide exchange factor for DnaK and may function as a thermosensor. Unfolded proteins bind initially to DnaJ; upon interaction with the DnaJ-bound protein, DnaK hydrolyzes its bound ATP, resulting in the formation of a stable complex. GrpE releases ADP from DnaK; ATP binding to DnaK triggers the release of the substrate protein, thus completing the reaction cycle. Several rounds of ATP-dependent interactions between DnaJ, DnaK and GrpE are required for fully efficient folding. This is Protein GrpE from Legionella pneumophila (strain Corby).